A 128-amino-acid chain; its full sequence is Large ribosomal subunit protein bL19 (128 aa).

Belongs to the bacterial ribosomal protein bL19 family.

Its function is as follows. This protein is located at the 30S-50S ribosomal subunit interface and may play a role in the structure and function of the aminoacyl-tRNA binding site. The polypeptide is Large ribosomal subunit protein bL19 (Caldicellulosiruptor bescii (strain ATCC BAA-1888 / DSM 6725 / KCTC 15123 / Z-1320) (Anaerocellum thermophilum)).